The following is a 934-amino-acid chain: LPS-assembly protein LptD (934 aa).

An N-terminal signal peptide occupies residues 1–33; the sequence is MALKSPAFRRKFPLLVTGGLLALQPFATSYVVA. A disordered region spans residues 52 to 86; that stretch reads KSPVNNLPPRPVHDGAALTSGTEAPSAEAESADKP.

This sequence belongs to the LptD family. As to quaternary structure, component of the lipopolysaccharide transport and assembly complex. Interacts with LptE and LptA.

It localises to the cell outer membrane. In terms of biological role, together with LptE, is involved in the assembly of lipopolysaccharide (LPS) at the surface of the outer membrane. The chain is LPS-assembly protein LptD from Pseudomonas putida (strain W619).